The sequence spans 146 residues: 3-dehydroquinate dehydratase (146 aa).

The active-site Proton acceptor is Tyr-23. 3 residues coordinate substrate: Asn-79, His-85, and Asp-92. The Proton donor role is filled by His-105. Substrate-binding positions include 106–107 (IS) and Arg-116.

This sequence belongs to the type-II 3-dehydroquinase family. Homododecamer.

The catalysed reaction is 3-dehydroquinate = 3-dehydroshikimate + H2O. Its pathway is metabolic intermediate biosynthesis; chorismate biosynthesis; chorismate from D-erythrose 4-phosphate and phosphoenolpyruvate: step 3/7. Catalyzes a trans-dehydration via an enolate intermediate. The protein is 3-dehydroquinate dehydratase of Variovorax paradoxus (strain S110).